The primary structure comprises 216 residues: FMN-dependent NADH:quinone oxidoreductase 2 (216 aa).

FMN contacts are provided by residues serine 9, serine 15–serine 17, methionine 96–phenylalanine 99, and serine 140–glycine 143.

The protein belongs to the azoreductase type 1 family. In terms of assembly, homodimer. The cofactor is FMN.

It catalyses the reaction 2 a quinone + NADH + H(+) = 2 a 1,4-benzosemiquinone + NAD(+). It carries out the reaction N,N-dimethyl-1,4-phenylenediamine + anthranilate + 2 NAD(+) = 2-(4-dimethylaminophenyl)diazenylbenzoate + 2 NADH + 2 H(+). Quinone reductase that provides resistance to thiol-specific stress caused by electrophilic quinones. In terms of biological role, also exhibits azoreductase activity. Catalyzes the reductive cleavage of the azo bond in aromatic azo compounds to the corresponding amines. This is FMN-dependent NADH:quinone oxidoreductase 2 from Xanthomonas axonopodis pv. citri (strain 306).